We begin with the raw amino-acid sequence, 295 residues long: Ethanolamine ammonia-lyase small subunit (295 aa).

Adenosylcob(III)alamin-binding residues include Val207, Glu228, and Cys258.

Belongs to the EutC family. As to quaternary structure, the basic unit is a heterodimer which dimerizes to form tetramers. The heterotetramers trimerize; 6 large subunits form a core ring with 6 small subunits projecting outwards. It depends on adenosylcob(III)alamin as a cofactor.

It localises to the bacterial microcompartment. It catalyses the reaction ethanolamine = acetaldehyde + NH4(+). The protein operates within amine and polyamine degradation; ethanolamine degradation. Its function is as follows. Catalyzes the deamination of various vicinal amino-alcohols to oxo compounds. Allows this organism to utilize ethanolamine as the sole source of nitrogen and carbon in the presence of external vitamin B12. The protein is Ethanolamine ammonia-lyase small subunit of Escherichia coli O81 (strain ED1a).